A 208-amino-acid chain; its full sequence is ATP-dependent Clp protease proteolytic subunit 1 (208 aa).

Ser108 (nucleophile) is an active-site residue. His133 is a catalytic residue.

It belongs to the peptidase S14 family. Fourteen ClpP subunits assemble into 2 heptameric rings which stack back to back to give a disk-like structure with a central cavity, resembling the structure of eukaryotic proteasomes.

It is found in the cytoplasm. The enzyme catalyses Hydrolysis of proteins to small peptides in the presence of ATP and magnesium. alpha-casein is the usual test substrate. In the absence of ATP, only oligopeptides shorter than five residues are hydrolyzed (such as succinyl-Leu-Tyr-|-NHMec, and Leu-Tyr-Leu-|-Tyr-Trp, in which cleavage of the -Tyr-|-Leu- and -Tyr-|-Trp bonds also occurs).. Its function is as follows. Cleaves peptides in various proteins in a process that requires ATP hydrolysis. Has a chymotrypsin-like activity. Plays a major role in the degradation of misfolded proteins. The protein is ATP-dependent Clp protease proteolytic subunit 1 of Corynebacterium efficiens (strain DSM 44549 / YS-314 / AJ 12310 / JCM 11189 / NBRC 100395).